Consider the following 346-residue polypeptide: Holliday junction branch migration complex subunit RuvB (346 aa).

A large ATPase domain (RuvB-L) region spans residues 1-181 (MSDRNPLIDA…FGIPTRLNFY (181 aa)). Residues L20, R21, G62, K65, T66, T67, 128-130 (EDF), R171, Y181, and R218 contribute to the ATP site. A Mg(2+)-binding site is contributed by T66. The interval 182–252 (TVEELEYIVR…IADEALSRLE (71 aa)) is small ATPAse domain (RuvB-S). The interval 255 to 346 (NRGLDQLDRR…SQYGLFMEDE (92 aa)) is head domain (RuvB-H). Residues R291, R310, and R315 each contribute to the DNA site.

This sequence belongs to the RuvB family. As to quaternary structure, homohexamer. Forms an RuvA(8)-RuvB(12)-Holliday junction (HJ) complex. HJ DNA is sandwiched between 2 RuvA tetramers; dsDNA enters through RuvA and exits via RuvB. An RuvB hexamer assembles on each DNA strand where it exits the tetramer. Each RuvB hexamer is contacted by two RuvA subunits (via domain III) on 2 adjacent RuvB subunits; this complex drives branch migration. In the full resolvosome a probable DNA-RuvA(4)-RuvB(12)-RuvC(2) complex forms which resolves the HJ.

The protein resides in the cytoplasm. The catalysed reaction is ATP + H2O = ADP + phosphate + H(+). Its function is as follows. The RuvA-RuvB-RuvC complex processes Holliday junction (HJ) DNA during genetic recombination and DNA repair, while the RuvA-RuvB complex plays an important role in the rescue of blocked DNA replication forks via replication fork reversal (RFR). RuvA specifically binds to HJ cruciform DNA, conferring on it an open structure. The RuvB hexamer acts as an ATP-dependent pump, pulling dsDNA into and through the RuvAB complex. RuvB forms 2 homohexamers on either side of HJ DNA bound by 1 or 2 RuvA tetramers; 4 subunits per hexamer contact DNA at a time. Coordinated motions by a converter formed by DNA-disengaged RuvB subunits stimulates ATP hydrolysis and nucleotide exchange. Immobilization of the converter enables RuvB to convert the ATP-contained energy into a lever motion, pulling 2 nucleotides of DNA out of the RuvA tetramer per ATP hydrolyzed, thus driving DNA branch migration. The RuvB motors rotate together with the DNA substrate, which together with the progressing nucleotide cycle form the mechanistic basis for DNA recombination by continuous HJ branch migration. Branch migration allows RuvC to scan DNA until it finds its consensus sequence, where it cleaves and resolves cruciform DNA. The sequence is that of Holliday junction branch migration complex subunit RuvB from Brucella anthropi (strain ATCC 49188 / DSM 6882 / CCUG 24695 / JCM 21032 / LMG 3331 / NBRC 15819 / NCTC 12168 / Alc 37) (Ochrobactrum anthropi).